The primary structure comprises 439 residues: Glycosyl hydrolase DigH (439 aa).

The N-terminal stretch at 1 to 27 (MDICSRNKKLTIRRPAILVALALLLCS) is a signal peptide. The N-palmitoyl cysteine moiety is linked to residue C28. The S-diacylglycerol cysteine moiety is linked to residue C28. A disordered region spans residues 34–54 (ESMVTPPAGSKPPATTQQSSQ).

Belongs to the glycosyl hydrolase-like 10 (GHL10) family.

The protein localises to the cell outer membrane. Functionally, divisome-localized glycosyl hydrolase that cleaves peptide-free (denuded) peptidoglycans. The chain is Glycosyl hydrolase DigH from Escherichia coli O157:H7.